Reading from the N-terminus, the 68-residue chain is DNA gyrase inhibitor YacG (68 aa).

Residues C12, C15, C30, and C34 each contribute to the Zn(2+) site. Residues 48-68 (KLKTQDAPTSGKGQHSDDYED) form a disordered region.

Belongs to the DNA gyrase inhibitor YacG family. Interacts with GyrB. It depends on Zn(2+) as a cofactor.

Inhibits all the catalytic activities of DNA gyrase by preventing its interaction with DNA. Acts by binding directly to the C-terminal domain of GyrB, which probably disrupts DNA binding by the gyrase. The chain is DNA gyrase inhibitor YacG from Acinetobacter baylyi (strain ATCC 33305 / BD413 / ADP1).